Here is a 374-residue protein sequence, read N- to C-terminus: Type IV secretion system protein PtlG homolog (374 aa).

A helical transmembrane segment spans residues 38–56; that stretch reads WMFALVAVALSCLLATGIW. Positions 87–116 are disordered; that stretch reads PREPEPAPLPDMPAAPNPILPQPRPAPPVP. A compositionally biased stretch (pro residues) spans 92–116; the sequence is PAPLPDMPAAPNPILPQPRPAPPVP.

It belongs to the TrbI/VirB10 family.

It localises to the cell membrane. The polypeptide is Type IV secretion system protein PtlG homolog (ptlG) (Bordetella parapertussis (strain 12822 / ATCC BAA-587 / NCTC 13253)).